Reading from the N-terminus, the 197-residue chain is 5'-deoxynucleotidase yfbR (197 aa).

Residues Arg-16–Trp-17 and His-31 each bind substrate. Residues Val-28–Tyr-140 form the HD domain. His-31, His-66, and Asp-67 together coordinate a divalent metal cation. Residues Asp-67, Asp-75–Thr-78, and Asp-135 each bind substrate. Asp-135 is a binding site for a divalent metal cation.

Belongs to the 5DNU family. In terms of assembly, homodimer. Requires a divalent metal cation as cofactor.

The protein localises to the cytoplasm. The catalysed reaction is a 2'-deoxyribonucleoside 5'-phosphate + H2O = a 2'-deoxyribonucleoside + phosphate. Functionally, catalyzes the strictly specific dephosphorylation of 2'-deoxyribonucleoside 5'-monophosphates. This is 5'-deoxynucleotidase yfbR from Photorhabdus temperata.